The primary structure comprises 270 residues: Probable inner membrane protein BTH_II0599 (270 aa).

Helical transmembrane passes span 24 to 44 (RNPL…MLVS), 45 to 65 (LVPV…AVGF), 98 to 118 (LLTL…CSAL), 150 to 170 (ALIA…APVL), 198 to 218 (VYGL…AALM), and 226 to 246 (YALM…YCSF).

Its subcellular location is the cell inner membrane. In terms of biological role, (Microbial infection) Probably transports the toxic C-terminal region of CdiA-2 from B.pseudomallei strain 1026b across the inner membrane to the cytoplasm, where CdiA has a toxic effect. Expression in E.coli makes the bacteria sensitive to the tRNase domain of B.pseudomallei strain 1026b CdiA-2. In Burkholderia thailandensis (strain ATCC 700388 / DSM 13276 / CCUG 48851 / CIP 106301 / E264), this protein is Probable inner membrane protein BTH_II0599.